The primary structure comprises 85 residues: BmK AGP-SYPU2 (85 aa).

The signal sequence occupies residues 1–19 (MNYMVIISLALLVMTGVES). Residues 21-83 (KDGYIADDRN…ARIMKPGRCN (63 aa)) form the LCN-type CS-alpha/beta domain. 4 disulfide bridges follow: cysteine 31-cysteine 82, cysteine 35-cysteine 55, cysteine 41-cysteine 65, and cysteine 45-cysteine 67.

The protein belongs to the long (4 C-C) scorpion toxin superfamily. Sodium channel inhibitor family. Alpha subfamily. In terms of tissue distribution, expressed by the venom gland.

The protein localises to the secreted. Its function is as follows. Alpha toxins bind voltage-independently at site-3 of sodium channels (Nav) and inhibit the inactivation of the activated channels, thereby blocking neuronal transmission. Shows analgesic activity when intraperitoneally injected into mice. The protein is BmK AGP-SYPU2 of Olivierus martensii (Manchurian scorpion).